Reading from the N-terminus, the 244-residue chain is Uridylate kinase (244 aa).

ATP is bound at residue K16–G19. Residue G58 coordinates UMP. ATP-binding residues include G59 and R63. UMP-binding positions include D78 and V139–T146. ATP contacts are provided by T166, Y172, and D175.

It belongs to the UMP kinase family. In terms of assembly, homohexamer.

It localises to the cytoplasm. It carries out the reaction UMP + ATP = UDP + ADP. The protein operates within pyrimidine metabolism; CTP biosynthesis via de novo pathway; UDP from UMP (UMPK route): step 1/1. Inhibited by UTP. In terms of biological role, catalyzes the reversible phosphorylation of UMP to UDP. This is Uridylate kinase from Novosphingobium aromaticivorans (strain ATCC 700278 / DSM 12444 / CCUG 56034 / CIP 105152 / NBRC 16084 / F199).